Consider the following 215-residue polypeptide: Cytochrome b6 (215 aa).

A helical transmembrane segment spans residues I32–F52. A heme c-binding site is contributed by C35. Heme b is bound by residues H86 and H100. The next 3 membrane-spanning stretches (helical) occupy residues A90 to F110, L116 to Y136, and A186 to I206. Positions 187 and 202 each coordinate heme b.

The protein belongs to the cytochrome b family. PetB subfamily. As to quaternary structure, the 4 large subunits of the cytochrome b6-f complex are cytochrome b6, subunit IV (17 kDa polypeptide, PetD), cytochrome f and the Rieske protein, while the 4 small subunits are PetG, PetL, PetM and PetN. The complex functions as a dimer. Heme b is required as a cofactor. The cofactor is heme c.

It localises to the plastid. Its subcellular location is the chloroplast thylakoid membrane. In terms of biological role, component of the cytochrome b6-f complex, which mediates electron transfer between photosystem II (PSII) and photosystem I (PSI), cyclic electron flow around PSI, and state transitions. This Emiliania huxleyi (Coccolithophore) protein is Cytochrome b6.